We begin with the raw amino-acid sequence, 241 residues long: 1-(5-phosphoribosyl)-5-[(5-phosphoribosylamino)methylideneamino] imidazole-4-carboxamide isomerase (241 aa).

D8 functions as the Proton acceptor in the catalytic mechanism. D129 functions as the Proton donor in the catalytic mechanism.

It belongs to the HisA/HisF family.

It localises to the cytoplasm. It carries out the reaction 1-(5-phospho-beta-D-ribosyl)-5-[(5-phospho-beta-D-ribosylamino)methylideneamino]imidazole-4-carboxamide = 5-[(5-phospho-1-deoxy-D-ribulos-1-ylimino)methylamino]-1-(5-phospho-beta-D-ribosyl)imidazole-4-carboxamide. The protein operates within amino-acid biosynthesis; L-histidine biosynthesis; L-histidine from 5-phospho-alpha-D-ribose 1-diphosphate: step 4/9. The protein is 1-(5-phosphoribosyl)-5-[(5-phosphoribosylamino)methylideneamino] imidazole-4-carboxamide isomerase of Novosphingobium aromaticivorans (strain ATCC 700278 / DSM 12444 / CCUG 56034 / CIP 105152 / NBRC 16084 / F199).